A 97-amino-acid polypeptide reads, in one-letter code: Co-chaperonin GroES (97 aa).

This sequence belongs to the GroES chaperonin family. As to quaternary structure, heptamer of 7 subunits arranged in a ring. Interacts with the chaperonin GroEL.

The protein localises to the cytoplasm. Its function is as follows. Together with the chaperonin GroEL, plays an essential role in assisting protein folding. The GroEL-GroES system forms a nano-cage that allows encapsulation of the non-native substrate proteins and provides a physical environment optimized to promote and accelerate protein folding. GroES binds to the apical surface of the GroEL ring, thereby capping the opening of the GroEL channel. This Sodalis glossinidius (strain morsitans) protein is Co-chaperonin GroES.